A 566-amino-acid chain; its full sequence is Class II hydrophobin FOXG_02748 (566 aa).

An N-terminal signal peptide occupies residues 1 to 22 (MKSKSIMAASTVMELALAQASA). 4 disulfides stabilise this stretch: Cys-497-Cys-546, Cys-507-Cys-537, Cys-508-Cys-520, and Cys-547-Cys-558.

This sequence belongs to the cerato-ulmin hydrophobin family. In terms of assembly, homodimer. Homodimers further self-assemble to form highly ordered films at water-air interfaces through intermolecular interactions.

The protein localises to the secreted. It is found in the cell wall. In terms of biological role, aerial growth, conidiation, and dispersal of filamentous fungi in the environment rely upon a capability of their secreting small amphipathic proteins called hydrophobins (HPBs) with low sequence identity. Class I can self-assemble into an outermost layer of rodlet bundles on aerial cell surfaces, conferring cellular hydrophobicity that supports fungal growth, development and dispersal; whereas Class II form highly ordered films at water-air interfaces through intermolecular interactions but contribute nothing to the rodlet structure. FOXG_02748 is a class II hydrophobin that is likely required for plant colonization. The polypeptide is Class II hydrophobin FOXG_02748 (Fusarium oxysporum f. sp. lycopersici (strain 4287 / CBS 123668 / FGSC 9935 / NRRL 34936) (Fusarium vascular wilt of tomato)).